Reading from the N-terminus, the 224-residue chain is Respiratory supercomplex factor 2, mitochondrial (224 aa).

Over methionine 1–arginine 13 the chain is Mitochondrial intermembrane. The chain crosses the membrane as a helical span at residues serine 14–leucine 38. Topologically, residues proline 39–proline 47 are mitochondrial matrix. The helical transmembrane segment at serine 48–serine 75 threads the bilayer. Over asparagine 76 to serine 103 the chain is Mitochondrial intermembrane. Residues serine 89–glutamine 180 enclose the HIG1 domain. A helical membrane pass occupies residues threonine 104–valine 133. At isoleucine 134–threonine 142 the chain is on the mitochondrial matrix side. A helical membrane pass occupies residues lysine 143 to asparagine 173. The Mitochondrial intermembrane segment spans residues lysine 174–glutamate 184. A helical membrane pass occupies residues methionine 185–glutamate 204. Topologically, residues glycine 205 to serine 224 are mitochondrial matrix.

As to quaternary structure, associates with a subpopulation of the cytochrome bc1-cytochrome c oxidase supercomplexes. Associates in substoichiometric amounts with complex IV. Interacts with COX3.

Its subcellular location is the mitochondrion membrane. Functionally, assembly factor that plays a role in the assembly of the respiratory chain supercomplexes (SCs) composed of ubiquinol-cytochrome c oxidoreductase (cytochrome b-c1 complex, complex III, CIII) and cytochrome c oxidase (complex IV, CIV). May be required for late-stage assembly of the COX12 and COX13 subunits. Required for the generation and maintenance of a normal proton motive force (PMF) across the inner mitochondrial membrane (IMM) by preventing proton leakage through an inactive population of CIV that accumulates when RCF1 and/or RCF2 proteins are absent. The sequence is that of Respiratory supercomplex factor 2, mitochondrial (RCF2) from Saccharomyces cerevisiae (strain ATCC 204508 / S288c) (Baker's yeast).